Here is a 289-residue protein sequence, read N- to C-terminus: ATP synthase subunit a (289 aa).

Helical transmembrane passes span 43–63, 104–124, 160–180, 193–213, 232–252, and 259–279; these read AFHV…LFIF, IAPL…IDLV, ISVF…GGFL, IVVQ…TLIA, IFIL…ALGV, and AVFH…LTIV.

The protein belongs to the ATPase A chain family. As to quaternary structure, F-type ATPases have 2 components, CF(1) - the catalytic core - and CF(0) - the membrane proton channel. CF(1) has five subunits: alpha(3), beta(3), gamma(1), delta(1), epsilon(1). CF(0) has three main subunits: a(1), b(2) and c(9-12). The alpha and beta chains form an alternating ring which encloses part of the gamma chain. CF(1) is attached to CF(0) by a central stalk formed by the gamma and epsilon chains, while a peripheral stalk is formed by the delta and b chains.

It is found in the cell inner membrane. Its function is as follows. Key component of the proton channel; it plays a direct role in the translocation of protons across the membrane. This Pseudomonas paraeruginosa (strain DSM 24068 / PA7) (Pseudomonas aeruginosa (strain PA7)) protein is ATP synthase subunit a.